We begin with the raw amino-acid sequence, 694 residues long: MTFETISVTLEEGKTLVFETGKIARQANGAVLARMQETWVFSSVCAATLEEPVDFLPLRVDYQEKFSSIGKTLGGFIKREGRPTEREILTSRLIDRSMRPSLPNRLMQDVQILSYVWSYDGVTLPDPIAICGVSAALAISDIPQINIVAGVRVGFINNTWVVNPTKAEMDVSRMELVLAGTEKAILMIEGHCDFFTEEQVIEAIEFGHKHIVTICKAIEDWQKQIGKEKNTSAVVPLPEQVQTAVNTLVEGKFSDLLQIKEKKAFEAASKQLENDIVEKLQEENEIFTPLNIKTAFKQAKSDYMRSLIRKQGLRSDGRSVTTIRPISIDTSFLPRTHGSCLFTRGETQTVAVCTLGSEAMAQRYEDLNGEGLAKFYLQYFFPPFSVGEVGRIGSPGRREIGHGKLAEKALSHALPDPAKFPYTIRIESNITESNGSSSMASVCGGCLALMDAGVPIKTPIAGIAMGLILDDDHVTILSDISGLEDHLGDMDFKVAGNAEGITAFQMDIKVEGITPEIMQAALAQAKSGRQNILETMKATLASPKTDLSQYAPRIETMQIKPNKIATVIGPGGKQIRQIIEEAGVQIDINDSGLVSISASSPQAIEKAKSIIEGLVGEVEVGKIYEGRVTSIVPFGAFVEILPGKEGLCHISEFSKQRIENVGDFVKQGDILPVKLLSINEKGQYKLSHKATLSE.

Mg(2+)-binding residues include aspartate 485 and aspartate 491. Positions 552-611 (PRIETMQIKPNKIATVIGPGGKQIRQIIEEAGVQIDINDSGLVSISASSPQAIEKAKSII) constitute a KH domain. Residues 621 to 689 (GKIYEGRVTS…EKGQYKLSHK (69 aa)) form the S1 motif domain.

This sequence belongs to the polyribonucleotide nucleotidyltransferase family. It depends on Mg(2+) as a cofactor.

Its subcellular location is the cytoplasm. The enzyme catalyses RNA(n+1) + phosphate = RNA(n) + a ribonucleoside 5'-diphosphate. In terms of biological role, involved in mRNA degradation. Catalyzes the phosphorolysis of single-stranded polyribonucleotides processively in the 3'- to 5'-direction. The protein is Polyribonucleotide nucleotidyltransferase of Chlamydia felis (strain Fe/C-56) (Chlamydophila felis).